The chain runs to 447 residues: Tubulin beta chain (447 aa).

GTP contacts are provided by Q11, E69, S138, G142, T143, G144, N204, and N226. E69 lines the Mg(2+) pocket. Residues 419-447 are disordered; that stretch reads VSEYQQYQDATADEEGEYEDEDQEAEDDM. Residues 429–447 are compositionally biased toward acidic residues; the sequence is TADEEGEYEDEDQEAEDDM.

Belongs to the tubulin family. In terms of assembly, dimer of alpha and beta chains. A typical microtubule is a hollow water-filled tube with an outer diameter of 25 nm and an inner diameter of 15 nM. Alpha-beta heterodimers associate head-to-tail to form protofilaments running lengthwise along the microtubule wall with the beta-tubulin subunit facing the microtubule plus end conferring a structural polarity. Microtubules usually have 13 protofilaments but different protofilament numbers can be found in some organisms and specialized cells. Mg(2+) is required as a cofactor.

It is found in the cytoplasm. The protein resides in the cytoskeleton. Its function is as follows. Tubulin is the major constituent of microtubules, a cylinder consisting of laterally associated linear protofilaments composed of alpha- and beta-tubulin heterodimers. Microtubules grow by the addition of GTP-tubulin dimers to the microtubule end, where a stabilizing cap forms. Below the cap, tubulin dimers are in GDP-bound state, owing to GTPase activity of alpha-tubulin. The chain is Tubulin beta chain (TUBB) from Hordeum vulgare (Barley).